We begin with the raw amino-acid sequence, 158 residues long: PRA1 family protein 2 (158 aa).

4 helical membrane-spanning segments follow: residues 36–58 (NLNF…TLFT), 62–79 (LLVA…LFFV), 88–108 (FAVL…VIVI), and 113–133 (GLTL…HSAL).

The protein belongs to the PRA1 family.

It is found in the membrane. In terms of biological role, may act as a general Rab protein regulator. The protein is PRA1 family protein 2 (prafB) of Dictyostelium discoideum (Social amoeba).